Consider the following 108-residue polypeptide: Protein YcgL (108 aa).

The region spanning 12–96 (MFCVIYRSSK…PPEDLLKQHL (85 aa)) is the YcgL domain.

The polypeptide is Protein YcgL (Escherichia coli O17:K52:H18 (strain UMN026 / ExPEC)).